An 82-amino-acid chain; its full sequence is Large ribosomal subunit protein uL23 (82 aa).

Belongs to the universal ribosomal protein uL23 family. As to quaternary structure, part of the 50S ribosomal subunit. Contacts protein L29.

Binds to 23S rRNA. One of the proteins that surrounds the polypeptide exit tunnel on the outside of the ribosome. This chain is Large ribosomal subunit protein uL23, found in Methanospirillum hungatei JF-1 (strain ATCC 27890 / DSM 864 / NBRC 100397 / JF-1).